A 416-amino-acid polypeptide reads, in one-letter code: Glutamyl-tRNA reductase (416 aa).

Substrate is bound by residues 51 to 54 (TCNR), Ser-110, 115 to 117 (EPQ), and Gln-121. Residue Cys-52 is the Nucleophile of the active site. Residue 190–195 (GAGQTG) coordinates NADP(+).

The protein belongs to the glutamyl-tRNA reductase family. Homodimer.

The catalysed reaction is (S)-4-amino-5-oxopentanoate + tRNA(Glu) + NADP(+) = L-glutamyl-tRNA(Glu) + NADPH + H(+). Its pathway is porphyrin-containing compound metabolism; protoporphyrin-IX biosynthesis; 5-aminolevulinate from L-glutamyl-tRNA(Glu): step 1/2. Its function is as follows. Catalyzes the NADPH-dependent reduction of glutamyl-tRNA(Glu) to glutamate 1-semialdehyde (GSA). The polypeptide is Glutamyl-tRNA reductase (Francisella tularensis subsp. holarctica (strain OSU18)).